Reading from the N-terminus, the 565-residue chain is Adenine deaminase (565 aa).

This sequence belongs to the metallo-dependent hydrolases superfamily. Adenine deaminase family. Mn(2+) serves as cofactor.

It catalyses the reaction adenine + H2O + H(+) = hypoxanthine + NH4(+). This Cereibacter sphaeroides (strain ATCC 17025 / ATH 2.4.3) (Rhodobacter sphaeroides) protein is Adenine deaminase.